An 87-amino-acid polypeptide reads, in one-letter code: U3-theraphotoxin-Hhn1i (87 aa).

Residues 1-24 (MVNMEASMFLTFAGLVLLFVVCYA) form the signal peptide. The propeptide occupies 25-52 (SESEEKEFPKEMLSSIFAVDNDFKQEER). Cystine bridges form between C54/C67, C61/C72, and C66/C79.

The protein belongs to the neurotoxin 10 (Hwtx-1) family. 51 (Hntx-8) subfamily. Hntx-8 sub-subfamily. As to expression, expressed by the venom gland.

It is found in the secreted. Ion channel inhibitor. The chain is U3-theraphotoxin-Hhn1i from Cyriopagopus hainanus (Chinese bird spider).